The primary structure comprises 452 residues: MWSGRFSSPVCAPVQSFTASVGFDRAMCHCDAAVLAAHCRSLYLRRVMSIADLADVERGLSEVAMGARAGAISWRPELEDVHRNVEHVLTELVGKAGRMAHTGKSRNDQVSTTARVWLRHMAGAAICRVEELERALAARSRACLNTMMPGLTHMQVAQPVTAAHYLTAYRCMLSRDRSRLVRCTRGACVLTLGSGALAGTNHGGDRYTTADMLGLHCVSPNSLDAVSDRDFVMEYALCCAVLMVHMSRLAEDMIAWSSSIVGFAVLGDALCTGSSIMPQKKNPDILELVRAKAAVLIGGAMGIMAVMKAQGLAYNRDNQEDKAVLLGASRAVTRSLSVMALAVRSLRLNKSRLRRRLESSFAIATDLADSLVWHGMTFRDSHEAVARAVGVAIRAGHAGLRALPLCSRGVVPPLLAARLARIAQPDARVSAFRKDSTGSTSPKWSFRAMRRA.

The interval 431–452 (AFRKDSTGSTSPKWSFRAMRRA) is disordered.

This sequence belongs to the lyase 1 family. Argininosuccinate lyase subfamily.

It localises to the cytoplasm. The enzyme catalyses 2-(N(omega)-L-arginino)succinate = fumarate + L-arginine. It functions in the pathway amino-acid biosynthesis; L-arginine biosynthesis; L-arginine from L-ornithine and carbamoyl phosphate: step 3/3. The sequence is that of Argininosuccinate lyase from Tremblaya princeps.